We begin with the raw amino-acid sequence, 562 residues long: Arginine--tRNA ligase (562 aa).

The 'HIGH' region signature appears at 129 to 139 (ANPTGPLHVGH).

Belongs to the class-I aminoacyl-tRNA synthetase family. As to quaternary structure, monomer.

Its subcellular location is the cytoplasm. The catalysed reaction is tRNA(Arg) + L-arginine + ATP = L-arginyl-tRNA(Arg) + AMP + diphosphate. The chain is Arginine--tRNA ligase from Xanthomonas campestris pv. campestris (strain B100).